Consider the following 104-residue polypeptide: Large ribosomal subunit protein uL23 (104 aa).

It belongs to the universal ribosomal protein uL23 family. Part of the 50S ribosomal subunit. Contacts protein L29, and trigger factor when it is bound to the ribosome.

One of the early assembly proteins it binds 23S rRNA. One of the proteins that surrounds the polypeptide exit tunnel on the outside of the ribosome. Forms the main docking site for trigger factor binding to the ribosome. This Ralstonia nicotianae (strain ATCC BAA-1114 / GMI1000) (Ralstonia solanacearum) protein is Large ribosomal subunit protein uL23.